Here is a 116-residue protein sequence, read N- to C-terminus: Protein SPIRAL1-like 1 (116 aa).

Gly residues predominate over residues 1–12; it reads MSRGGSAGGGQS. The tract at residues 1-116 is disordered; the sequence is MSRGGSAGGG…SSLGYLFGGN (116 aa). A compositionally biased stretch (pro residues) spans 27–43; that stretch reads AAKPAPAAAPAPAPAPA. Over residues 44–60 the composition is skewed to low complexity; that stretch reads PAAAVAAPAEKPSPAKA. Over residues 72–90 the composition is skewed to polar residues; that stretch reads GSRSNNNYHRADGQNTGNF. Residues 103 to 116 are compositionally biased toward gly residues; sequence PGGGSSLGYLFGGN.

This sequence belongs to the SPIRAL1 family.

Its function is as follows. Acts in maintaining the cortical microtubules organization essential for anisotropic cell growth. The polypeptide is Protein SPIRAL1-like 1 (Oryza sativa subsp. japonica (Rice)).